A 160-amino-acid chain; its full sequence is SsrA-binding protein (160 aa).

Residues 130-160 (LAKGKKKHDKRADQKEQDWQRQKQRLMKHKV) are disordered. Basic and acidic residues predominate over residues 139–150 (KRADQKEQDWQR). Residues 151 to 160 (QKQRLMKHKV) are compositionally biased toward basic residues.

The protein belongs to the SmpB family.

Its subcellular location is the cytoplasm. Functionally, required for rescue of stalled ribosomes mediated by trans-translation. Binds to transfer-messenger RNA (tmRNA), required for stable association of tmRNA with ribosomes. tmRNA and SmpB together mimic tRNA shape, replacing the anticodon stem-loop with SmpB. tmRNA is encoded by the ssrA gene; the 2 termini fold to resemble tRNA(Ala) and it encodes a 'tag peptide', a short internal open reading frame. During trans-translation Ala-aminoacylated tmRNA acts like a tRNA, entering the A-site of stalled ribosomes, displacing the stalled mRNA. The ribosome then switches to translate the ORF on the tmRNA; the nascent peptide is terminated with the 'tag peptide' encoded by the tmRNA and targeted for degradation. The ribosome is freed to recommence translation, which seems to be the essential function of trans-translation. The chain is SsrA-binding protein from Alkalilimnicola ehrlichii (strain ATCC BAA-1101 / DSM 17681 / MLHE-1).